The sequence spans 114 residues: UPF0102 protein Shew_0226 (114 aa).

It belongs to the UPF0102 family.

The sequence is that of UPF0102 protein Shew_0226 from Shewanella loihica (strain ATCC BAA-1088 / PV-4).